The chain runs to 218 residues: Protein-methionine-sulfoxide reductase heme-binding subunit MsrQ (218 aa).

5 consecutive transmembrane segments (helical) span residues A14–W34, L60–I80, L86–L106, P121–T141, and L155–K175.

It belongs to the MsrQ family. As to quaternary structure, heterodimer of a catalytic subunit (MsrP) and a heme-binding subunit (MsrQ). FMN is required as a cofactor. The cofactor is heme b.

Its subcellular location is the cell inner membrane. In terms of biological role, part of the MsrPQ system that repairs oxidized periplasmic proteins containing methionine sulfoxide residues (Met-O), using respiratory chain electrons. Thus protects these proteins from oxidative-stress damage caused by reactive species of oxygen and chlorine generated by the host defense mechanisms. MsrPQ is essential for the maintenance of envelope integrity under bleach stress, rescuing a wide series of structurally unrelated periplasmic proteins from methionine oxidation. MsrQ provides electrons for reduction to the reductase catalytic subunit MsrP, using the quinone pool of the respiratory chain. The protein is Protein-methionine-sulfoxide reductase heme-binding subunit MsrQ of Xanthomonas campestris pv. campestris (strain B100).